The chain runs to 463 residues: Kynureninase 2 (463 aa).

Pyridoxal 5'-phosphate contacts are provided by residues leucine 134, threonine 135, 162–165 (FPSD), aspartate 247, histidine 250, and tyrosine 272. Lysine 273 is subject to N6-(pyridoxal phosphate)lysine. Residues tryptophan 312 and asparagine 340 each contribute to the pyridoxal 5'-phosphate site.

It belongs to the kynureninase family. As to quaternary structure, homodimer. Requires pyridoxal 5'-phosphate as cofactor.

The protein localises to the cytoplasm. It catalyses the reaction L-kynurenine + H2O = anthranilate + L-alanine + H(+). The catalysed reaction is 3-hydroxy-L-kynurenine + H2O = 3-hydroxyanthranilate + L-alanine + H(+). It functions in the pathway amino-acid degradation; L-kynurenine degradation; L-alanine and anthranilate from L-kynurenine: step 1/1. It participates in cofactor biosynthesis; NAD(+) biosynthesis; quinolinate from L-kynurenine: step 2/3. Functionally, catalyzes the cleavage of L-kynurenine (L-Kyn) and L-3-hydroxykynurenine (L-3OHKyn) into anthranilic acid (AA) and 3-hydroxyanthranilic acid (3-OHAA), respectively. The protein is Kynureninase 2 (bna5-2) of Aspergillus terreus (strain NIH 2624 / FGSC A1156).